A 682-amino-acid chain; its full sequence is Methionine--tRNA ligase (682 aa).

The 'HIGH' region motif lies at 15-25 (PYANGAIHLGH). 4 residues coordinate Zn(2+): Cys-146, Cys-149, Cys-159, and Cys-162. Residues 331-335 (KMSKS) carry the 'KMSKS' region motif. Residue Lys-334 coordinates ATP. Residues 580–682 (DFAKLDMRVA…NGVTAGMQVK (103 aa)) form the tRNA-binding domain.

It belongs to the class-I aminoacyl-tRNA synthetase family. MetG type 1 subfamily. In terms of assembly, homodimer. Zn(2+) is required as a cofactor.

It is found in the cytoplasm. The enzyme catalyses tRNA(Met) + L-methionine + ATP = L-methionyl-tRNA(Met) + AMP + diphosphate. Its function is as follows. Is required not only for elongation of protein synthesis but also for the initiation of all mRNA translation through initiator tRNA(fMet) aminoacylation. The chain is Methionine--tRNA ligase from Haemophilus influenzae (strain PittGG).